Consider the following 1762-residue polypeptide: Non-reducing polyketide synthase PKS8-1 (1762 aa).

Residues 17–247 (DIYRGLHNHS…ARYIELPVYG (231 aa)) form an N-terminal acylcarrier protein transacylase domain (SAT) region. One can recognise a Ketosynthase family 3 (KS3) domain in the interval 385 to 819 (QSKLAITGIS…GGNTTMVLEE (435 aa)). Active-site for beta-ketoacyl synthase activity residues include Cys558, His694, and His737. A malonyl-CoA:ACP transacylase (MAT) domain region spans residues 920 to 1240 (FSFTGQGASH…MAALHLTGVA (321 aa)). The segment at 1308 to 1622 (TSTVQQVIAL…PRILLNRFFS (315 aa)) is product template (PT) domain. Positions 1312-1448 (QQVIALEVEG…GDANDWLSSW (137 aa)) are N-terminal hotdog fold. One can recognise a PKS/mFAS DH domain in the interval 1312 to 1618 (QQVIALEVEG…FRSYPRILLN (307 aa)). The Proton acceptor; for dehydratase activity role is filled by His1344. A C-terminal hotdog fold region spans residues 1471–1618 (ASRFTRNMAY…FRSYPRILLN (148 aa)). Asp1529 functions as the Proton donor; for dehydratase activity in the catalytic mechanism. The interval 1632–1689 (RAGNAATVTPQVTIPKPPSSLKTPAPANPSRRDSGVESKPLPPPQPKQAPPSTDSENS) is disordered. Over residues 1671-1680 (PLPPPQPKQA) the composition is skewed to pro residues. The Carrier domain occupies 1685-1762 (DSENSTISKA…DMRRWLEEHY (78 aa)). Ser1722 carries the O-(pantetheine 4'-phosphoryl)serine modification.

The enzyme catalyses holo-[ACP] + 8 malonyl-CoA + 8 H(+) = atrochrysone carboxyl-[ACP] + 8 CO2 + 8 CoA + 2 H2O. Its pathway is secondary metabolite biosynthesis. Functionally, non-reducing polyketide synthase; part of the gene cluster that mediates the biosynthesis of an emodin derivative that may be involved in black Sigatoka disease of banana. The pathway begins with the synthesis of atrochrysone thioester by the polyketide synthase PKS8-1. The atrochrysone carboxyl ACP thioesterase MYCFIDRAFT_190111 then breaks the thioester bond and releases the atrochrysone carboxylic acid from PKS8-1. The decarboxylase MYCFIDRAFT_34057 then catalyzes the concerted decarboxylation-elimination required to convert atochrysone carboxylic acid into emodin anthrone, which is further oxidized to emodin by the anthrone oxygenase MYCFIDRAFT_34418. The functions of the other tailoring enzymes as well as the final product of the cluster have still to be identified. This is Non-reducing polyketide synthase PKS8-1 (PKS8-1) from Pseudocercospora fijiensis (strain CIRAD86) (Black leaf streak disease fungus).